The following is a 277-amino-acid chain: Inositol monophosphatase 1 (277 aa).

Residues E70, D90, I92, and D93 each contribute to the Mg(2+) site. Residues E70, 90–95 (DPIDGT), 194–196 (GTA), E213, and D220 contribute to the substrate site. Position 220 (D220) interacts with Mg(2+).

The protein belongs to the inositol monophosphatase superfamily. As to quaternary structure, homodimer. Mg(2+) is required as a cofactor. In terms of tissue distribution, mostly expressed in brain, small intestine, testis, kidney, and spleen (at protein level).

It is found in the cytoplasm. The enzyme catalyses a myo-inositol phosphate + H2O = myo-inositol + phosphate. It carries out the reaction 1D-myo-inositol 1-phosphate + H2O = myo-inositol + phosphate. It catalyses the reaction 1D-myo-inositol 2-phosphate + H2O = myo-inositol + phosphate. The catalysed reaction is 1D-myo-inositol 3-phosphate + H2O = myo-inositol + phosphate. The enzyme catalyses 1D-myo-inositol 4-phosphate + H2O = myo-inositol + phosphate. It carries out the reaction 1D-myo-inositol 5-phosphate + H2O = myo-inositol + phosphate. It catalyses the reaction 1D-myo-inositol 6-phosphate + H2O = myo-inositol + phosphate. The catalysed reaction is scyllo-inositol 1-phosphate + H2O = scyllo-inositol + phosphate. The enzyme catalyses alpha-D-galactose 1-phosphate + H2O = D-galactose + phosphate. It carries out the reaction alpha-D-glucose 1-phosphate + H2O = D-glucose + phosphate. It catalyses the reaction D-glucose 6-phosphate + H2O = D-glucose + phosphate. The catalysed reaction is beta-D-fructose 1-phosphate + H2O = D-fructose + phosphate. The enzyme catalyses glycerol 2-phosphate + H2O = glycerol + phosphate. It carries out the reaction adenosine 2'-phosphate + H2O = adenosine + phosphate. The protein operates within polyol metabolism; myo-inositol biosynthesis; myo-inositol from D-glucose 6-phosphate: step 2/2. Its activity is regulated as follows. Inhibited by Li(+), Ca(2+) and Mn(2+), but also by Mg(2+) at concentrations above 3 mM. Phosphatase involved in the dephosphorylation of myo-inositol monophosphate to generate myo-inositol. Is also able to dephosphorylate scyllo-inositol-phosphate, myo-inositol 1,4-diphosphate, scyllo-inositol-1,3-diphosphate and scyllo-inositol-1,4-diphosphate. Also dephosphorylates in vitro other sugar-phosphates including D-galactose-1-phosphate, glucose-1-phosphate, glucose-6-phosphate, fructose-1-phosphate, beta-glycerophosphate and 2'-AMP. Responsible for the provision of inositol required for synthesis of phosphatidylinositol and polyphosphoinositides, and involved in maintaining normal brain function. Has been implicated as the pharmacological target for lithium Li(+) action in brain. The chain is Inositol monophosphatase 1 (Impa1) from Mus musculus (Mouse).